The sequence spans 449 residues: Chromosomal replication initiator protein DnaA (449 aa).

Positions 1-73 (MDADLKNLWD…ANSIKAVCSK (73 aa)) are domain I, interacts with DnaA modulators. Residues 73-110 (KLYTIEFIIMSEIYEKEEIKSSSNQKSKAIVVNDEMSS) form a domain II region. Residues 111 to 327 (TLNPKYTFNS…GALIRIIAYS (217 aa)) are domain III, AAA+ region. 4 residues coordinate ATP: Gly-155, Gly-157, Lys-158, and Thr-159. The domain IV, binds dsDNA stretch occupies residues 328-449 (SLTNREVTVD…NDITKKLTQN (122 aa)).

This sequence belongs to the DnaA family. Oligomerizes as a right-handed, spiral filament on DNA at oriC.

It is found in the cytoplasm. In terms of biological role, plays an essential role in the initiation and regulation of chromosomal replication. ATP-DnaA binds to the origin of replication (oriC) to initiate formation of the DNA replication initiation complex once per cell cycle. Binds the DnaA box (a 9 base pair repeat at the origin) and separates the double-stranded (ds)DNA. Forms a right-handed helical filament on oriC DNA; dsDNA binds to the exterior of the filament while single-stranded (ss)DNA is stabiized in the filament's interior. The ATP-DnaA-oriC complex binds and stabilizes one strand of the AT-rich DNA unwinding element (DUE), permitting loading of DNA polymerase. After initiation quickly degrades to an ADP-DnaA complex that is not apt for DNA replication. Binds acidic phospholipids. The protein is Chromosomal replication initiator protein DnaA of Clostridium beijerinckii (strain ATCC 51743 / NCIMB 8052) (Clostridium acetobutylicum).